Reading from the N-terminus, the 185-residue chain is Transcription termination/antitermination protein NusG (185 aa).

The KOW domain occupies proline 134–leucine 162.

Belongs to the NusG family.

Functionally, participates in transcription elongation, termination and antitermination. The chain is Transcription termination/antitermination protein NusG from Xylella fastidiosa (strain Temecula1 / ATCC 700964).